We begin with the raw amino-acid sequence, 78 residues long: MARKDDVTGEGPVTGNSVSDSNQKTNRRFKRNLHEKRFYIPSEDRHVKLKVSSKTLKTINKKGIQAVLEEARKQGYDV.

Residues 1 to 33 form a disordered region; it reads MARKDDVTGEGPVTGNSVSDSNQKTNRRFKRNL. The span at 14–24 shows a compositional bias: polar residues; it reads TGNSVSDSNQK.

This sequence belongs to the bacterial ribosomal protein bL28 family.

This Salinibacter ruber (strain DSM 13855 / M31) protein is Large ribosomal subunit protein bL28.